The sequence spans 234 residues: 2,3,4,5-tetrahydropyridine-2,6-dicarboxylate N-acetyltransferase (234 aa).

Belongs to the transferase hexapeptide repeat family. DapH subfamily.

The catalysed reaction is (S)-2,3,4,5-tetrahydrodipicolinate + acetyl-CoA + H2O = L-2-acetamido-6-oxoheptanedioate + CoA. Its pathway is amino-acid biosynthesis; L-lysine biosynthesis via DAP pathway; LL-2,6-diaminopimelate from (S)-tetrahydrodipicolinate (acetylase route): step 1/3. Functionally, catalyzes the transfer of an acetyl group from acetyl-CoA to tetrahydrodipicolinate. This is 2,3,4,5-tetrahydropyridine-2,6-dicarboxylate N-acetyltransferase from Leuconostoc citreum (strain KM20).